The chain runs to 254 residues: Reaction center protein L chain (254 aa).

3 helical membrane passes run Phe10–Leu32, Gly60–Leu88, and His93–Leu115. His130 and His150 together coordinate (7R,8Z)-bacteriochlorophyll b. A helical transmembrane segment spans residues Pro148–Ile175. Position 167 (His167) interacts with Fe cation. Phe193 provides a ligand contact to a ubiquinone. A helical transmembrane segment spans residues Gly202 to Leu227. His207 contributes to the Fe cation binding site.

The protein belongs to the reaction center PufL/M/PsbA/D family. As to quaternary structure, reaction center is composed of four bacteriochlorophylls, two bacteriopheophytins, two ubiquinones, one iron, and two highly hydrophobic polypeptide chains (designated L and M).

The protein localises to the cell inner membrane. The reaction center is a membrane-bound complex that mediates the initial photochemical event in the electron transfer process of photosynthesis. This chain is Reaction center protein L chain (pufL), found in Acidiphilium organovorum.